The following is a 5148-amino-acid chain: MECPQCGHVSSEKAPKFCSECGQKLPSAATVQGDLKNDNTLVVSSTPEGKTEQGAVLREEEVLLSSTDPGKELEKPEESDSNASWTTQMSKKEKRRRKRQGTISSSEAPSSGLWSLDMPPSPGSHNSALPQNQAQQGGAASQPGHPLDTENMPMEDGFVHTEGSGSPLQGQAAERTDAQSNLAPSDLAEVKDLNTSKPSVDKGLPLDGGPALSAFKGHPKMTDASQKAPLPESKGETSGQEKKVPPIDAAASPVKTAGKETGEDVRKPKPSPVSPVASKHGDQEAELKGKLATPVRKSNEGGNTQPEDQRKPGEGRNFAAAVKTQQAAAPQQAAAPEPTSAFNPRDTVTVYFHAIVSRHFGFNPEEHKVYVRGGEGLGQKGWTDACEMYCTQDLHDLGSLVEGKMDIPRQSLDKPIPYKYVIHRGGSSKDTVEYEFIYEQAQKKGEHVNRCLRVVSTSLGNGDWHQYDDIICMRSTGFFQQAKNRILDSTRKELLKGKKQAAVVMLDRIFSVLQPWSDINLQSFMTQFLQFYSVVREPMIHDGRARKWTSLQYEEKEVWTNLWEHVKKQMAPFLEGKSGESLPADCPVRSKLTLGLSILFMVEAAEFTVPKKDLDSLCYLLIPSAGSPEALHSDLSPVLRIRQRWRIYLTNLCLRCIDERCDRWLGILPLLHTCMQKSPPKKNSKSQPEDTWAGLEGISFSEFRDKAPTRSQPLQFMQSKMALLRVDEYLFRSWLSVVPLESLSSYLENSIDYLSDVPVRVLDCLQGISYRLPGLRKISNQNMKKDVENVFKMLMHLVDIYQHRIFGENLLQIYLTECLTLHETVCNITANHQFFEIPALSAELICKLLELSPPGHTDEGLPEKSYEDLVTSTLQEALATTRNWLRSLFKSRMLSISSAYVRLTYSEEMAVWRRLVEIGFPEKHGWKGSLLGDMEGRLKQEPPRLQISFFCSSQCRDGGLHDSVSRSFEKCVIEAVSSACQSQTSVLEGLSCQDLQKFGTLLSAVITKSWPVHNGEPVFDVDEIFKYLLKWPDVRQLFELCGTNEKIIDNITEEGRQLMATAESVFQKVAGELENGTIVVGQLELILEHQSQFLDIWNLNRRRLPSQEKACDVRSLLKRRRDDLLFLKQEKRYVESLLRQLGRVKHLVQVDFGNIEIIHSQDLSNKKLNEAVIKLPNSSSYKRETHYCLSPDIREMASKLDSLKDSHIFQDFWQETAESLNTLDKDPRELKVSLPEVLEYLYNPCYDNFYTLYENLKSGKITFAEVDAIFKDFVDKYDELKNDLKFMCTMNPQDQKGWISERVGQIKEYHTLHQAVSSAKVILQVRRALGVTGDFSVLNPLLNFADSFEDFGNEKLDQISPQFIKAKQLLQDISEPRQRCLEELARQTELVAWLHKALEDINELKVFVDLASISAGENDIDVDRVACFHDAVQGYASLLYKMDERTNFSDFMNHLQELWRALDNDQHLPDKLKDSARNLEWLKTVKESHGSVELSSLSLATAINSRGVYVIEAPKDGQKISPDTVLRLLLPDGHGYPEALRTYSTEELKELLNKLMLMSGKKDHNSNTEVEKFSEVFSNMQRLVHVFIKLHCAGNMLFRTWTAKVYCCPDGGIFMNFGLELLSQLTEKGDVIQLLGALCRQMEDFLDNWKTVVAQKRAEHFYLNFYTAEQLVYLSSELRKPRPSEAALMMLSFIKGKCTVQDLVQATSACESKADRYCLREVMKKLPQQLLSEPSLMGKLQVIMMQSLVYMSAFLPHCLDLDALGRCLAHLATMGGTPVERPLPKGLQAGQPNLILCGHSEVLPAALAIYMQAPRQPLPTFDEVLLCTPATTIEEVELLLRRCLTSGSQGHKVYSLLFADQLSYEVGCQAEEFFQSLCTRAHREDYQLVILCDAAREHCYIPSTFSQYKVPLVPQAPLPNIQAYLQSHYQVPKRLLSAATVFRDGLCVGIVTSERAGVGKSLYVNTLHTKLKAKLRDETVPLKIIRLTEPHLDENQVLSALLPFLKEKYQKMPVIFHIDISTSVQTGIPIFLFKLLILQYLMDINGKIWRRSPGHLYLVEIPQGLSVQPKRSSKLNARAPLFKFLDLFPKVTCRPPKEVIDMELTPERSHTDPAMDPVEFCSEAFQRPYQYLKRFHQQQNLDTFQYEKGSVEGSPEECLQHFLIYCGLINPSWSELRNFAWFLNCQLKDCEASIFCKSAFTGDTLRGFKNFVVTFMILMARDFATPTLHTSDQSPGRQSVTIGEVVEEDLAPFSLRKRWESEPHPYVFFNGDHMTMTFIGFHLETNNNGYVDAINPSNGKVIKKDVMTKELFDGLRLQRVPFNIDFDNLPRYEKLERLCLALGIEWPIDPDETYELTTDNMLKILAIEMRFRCGIPVIIMGETGCGKTRLIKFLSDLKRGSVEAETMKLVKVHGGTTPSMIYSKVKEAERTAFSNKAQHKLDTILFFDEANTTEAVSCIKEILCDRTVDGEHLHEDSGLHIIAACNPYRKHSQEMILRLESAGLGYRVSAEETADRLGSIPLRQLVYRVHALPPSLIPLVWDFGQLNDSAEKLYIQQIVQRLVDSVSVNPSETCVIADVLSASQMFMRKRENECGFVSLRDVERCVKVFRWFHDHSDMLLKELDKFLHESSDSTHTFERDPVLWSLVMAIGVCYHASLEEKASYRTAIARCFPKPYNSSRAILDEVTHVQDLFLRGAPIRTNIARNLALKENVFMMVICIELKIPLFLVGKPGSSKSLAKIIVADAMQGQAAFSELFRCLKQVHLVSFQCSPHSTPQGIISTFKQCARFQQGKDLGQYVSVVVLDEVGLAEDSPKMPLKTLHPLLEDGCIEDDPAPYKKVGFVGISNWALDPAKMNRGIFVSRGSPNEKELIESAEGICSSDRLVQDKIRGYFAPFAKAYETVCQKQDKEFFGLRDYYSLIKMVFAKAKASKRGLSPQDITHAVLRNFSGKDNIQALSIFTASLPEARYKEEVSTVELIKQNIYPGPQASSRGLDGAESRYLLVLTRNYVALQILQQTFFEGQQPEIIFGSSFPQDQEYTQICRNINRVKICMETGKMVVLLNLQNLYESLYDALNQYYVYLGGQKYVDLGLGTHRVKCRVHTAFRLIVIEEKDVVYKQFPVPLINRLEKHYLDMNTVLQPWQKSIVQELQQWAHEFADVKADQFIARHKYSPADVFIGYHSDACASVVLQAVERQGCRDLTEELYRKVSEEARSILLDCATPDAVVRLSGSSLGSFTAKQLSQEYYYAQQHNSFVDFLQAHLRMTHHECRAVFTEITTFSRLLTGNDCDVLASELRGLASKPVVLSLQQYDTEYSFLKDVRSWLTNPGKRKVLVIQADFDDGTRSAQLVASAKYTAINEINKTQGTKDFVFVYFVTKLSRMGSGTSYVGFHGGLWRSVHIDDLRRSTIMASDVTKLQNVTISQLFKPEDKPEQEEMEIETSQSKELAEEQMEVEDSEEMKKASDPRSCDCSQFLDTTRLVQSCVQGAVGMLRDQNESCARNMRRVTILLDLLNEDNTRNASFLRESKMRLHVLLNKQEENQVRSLKEWVTREAANQDALQEAGTFRHTLWKRVQDVVTPILASMIAHIDRDGNLELLAQPDSPAWVQDLWMFIYSDIKFLNISLVLNNTRSNSEMSFILVQSHMNLLKDAYNAVPFSWRIRDYLEELWVQAQYITDTEGLSKKFVEIFQKTPLGVFLAQFPVAQQQKLLQSYLKDFLLLTMKVSSREELMFLQMALWSCLRELQEASGTPDETYKFPLSLPWVHLAFQHFRTRLQNFSRILTIHPQVLSSLSQAAEKHSLAGCEMTLDAFAAMACAEMLKGDLLKPSPKAWLQLVKNLSTPLELVCSEGYLCDSGSMTRSVIQEVRALWNRIFSIALFVEHVLLGTESHIPELSPLVTTYVSLLDKCLEEDSNLKTCRPFVAVMTTLCDCKDKASKKFSRFGIQPCFICHGDAQDPVCLPCDHVYCLRCIQTWLIPGQMMCPYCLTDLPDKFSPTVSQDHRKAIEKHAQFRHMCNSFFVDLVSTMCFKDNTPPEKSVIDTLLSLLFVQKELLRDASQKHREHTKSLSPFDDVVDQTPVIRSVLLKLLLKYSFHEVKDYIQNYLTQLEKKAFLTEDKTELYLLFISCLEDSVHQKTSAGCRNLEQVLREEGHFLRTYSPGLQGQEPVRIASVEYLQEVARVRLCLDLAADFLSELQEGSELAEDKRRFLKHVEEFCTRVNNDWHRVYLVRKLSSQRGMEFVQSFSKQGHPCQWVFPRKVIAQQKDHVSLMDRYLVHGNEYKAVRDATAKAVLECKTLDIGNALMACRSPKPQQTAYLLLALYTEVAALYRSPNGSLHPEAKQLEAVNKFIKESKILSDPNIRCFARSLVDNTLPLLKIRSANSILKGTVTEMAVHVATILLCGHNQILKPLRNLAFYPVNMANAFLPTMPEDLLVHARTWRGLENVTWYTCPRGHPCSVGECGRPMQESTCLDCGLPVGGLNHTPHEGFSAIRNNEDRTQTGHVLGSPQSSGVAEVSDRGQSPVVFILTRLLTHLAMLVGATHNPQALTVIIKPWVQDPQGFLQQHIQRDLEQLTKMLGRSADETIHVVHLILSSLLRVQSHGVLNFNAELSTKGCRNNWEKHFETLLLRELKHLDKNLPAINALISQDERISSNPVTKIIYGDPATFLPHLPQKSIIHCSKIWSCRRKITVEYLQHIVEQKNGKETVPVLWHFLQKEAELRLVKFLPEILALQRDLVKQFQNVSRVEYSSIRGFIHSHSSDGLRKLLHDRITIFLSTWNALRRSLETNGEIKLPKDYCCSDLDLDAEFEVILPRRQGLGLCGTALVSYLISLHNNMVYTVQKFSNEDNSYSVDISEVADLHVISYEVERDLNPLILSNCQYQVQQGGETSQEFDLEKIQRQISSRFLQGKPRLTLKGIPTLVYRRDWNYEHLFMDIKNKMAQSSLPNLAISTISGQLQSYSDACEALSIIEITLGFLSTAGGDPGMDLNVYIEEVLRMCDQTAQVLKAFSRCQLRHIIALWQFLSAHKSEQRLRLNKELFREIDVQYKEELSTQHQRLLGTFLNEAGLDAFLLELHEMIVLKLKGPRAANSFNPNWSLKDTLVSYMETKDSDILSEVESQFPEEILMSSCISVWKIAATRKWDRQSR.

Polar residues predominate over residues 38-48 (DNTLVVSSTPE). Residues 38 to 341 (DNTLVVSSTP…QAAAPEPTSA (304 aa)) are disordered. A compositionally biased stretch (basic and acidic residues) spans 69-78 (PGKELEKPEE). A compositionally biased stretch (polar residues) spans 101-113 (GTISSSEAPSSGL). The span at 130–146 (PQNQAQQGGAASQPGHP) shows a compositional bias: low complexity. Phosphoserine is present on Ser196. 3 stretches are compositionally biased toward basic and acidic residues: residues 233–245 (SKGETSGQEKKVP), 257–267 (AGKETGEDVRK), and 279–289 (KHGDQEAELKG). Positions 319-335 (AAAVKTQQAAAPQQAAA) are enriched in low complexity. Lys1128 is covalently cross-linked (Glycyl lysine isopeptide (Lys-Gly) (interchain with G-Cter in SUMO2)). ATP-binding positions include 1957 to 1962 (GVGKSL), Glu2060, Ala2114, Asp2116, and Arg2177. At Ser2234 the chain carries Phosphoserine. ATP is bound by residues Lys2460 and Ser2535. Positions 3435–3465 (EEMEIETSQSKELAEEQMEVEDSEEMKKASD) form a coiled coil. Cys3947, Cys3950, Cys3962, His3964, Cys3967, Cys3970, Cys3982, Cys3985, Cys4451, and His4455 together coordinate Zn(2+). The segment at 3947–3986 (CFICHGDAQDPVCLPCDHVYCLRCIQTWLIPGQMMCPYCL) adopts an RING-type zinc-finger fold. The RZ-type zinc finger occupies 4429–4501 (MPEDLLVHAR…IRNNEDRTQT (73 aa)). Cys4462 serves as the catalytic Nucleophile; for E3 ubiquitin-lipopolysaccharide ligase activity. Residues Cys4471 and Cys4474 each coordinate Zn(2+).

Belongs to the AAA ATPase family. Monomer. Interacts with UBE2L3/UBCH7; UBE2L3/UBCH7 is the most efficient ubiquitin-conjugating enzyme E2 for the ubiquitin ligase activity. Interacts with UBE2N/UBC13; promoting 'Lys-63'-linked ubiquitination of target proteins.

It is found in the cytoplasm. The protein localises to the cytosol. The protein resides in the lipid droplet. The catalysed reaction is S-ubiquitinyl-[E2 ubiquitin-conjugating enzyme]-L-cysteine + [acceptor protein]-L-lysine = [E2 ubiquitin-conjugating enzyme]-L-cysteine + N(6)-ubiquitinyl-[acceptor protein]-L-lysine.. It catalyses the reaction ATP + H2O = ADP + phosphate + H(+). The protein operates within protein modification; protein ubiquitination. Functionally, atypical E3 ubiquitin ligase that can catalyze ubiquitination of both proteins and lipids, and which is involved in various processes, such as lipid metabolism, angiogenesis and cell-autonomous immunity. Acts as a key immune sensor by catalyzing ubiquitination of the lipid A moiety of bacterial lipopolysaccharide (LPS) via its RZ-type zinc-finger: restricts the proliferation of cytosolic bacteria, such as Salmonella, by generating the bacterial ubiquitin coat through the ubiquitination of LPS. Also acts indirectly by mediating the recruitment of the LUBAC complex, which conjugates linear polyubiquitin chains. Ubiquitination of LPS triggers cell-autonomous immunity, such as antibacterial autophagy, leading to degradation of the microbial invader. Involved in lipid metabolism by regulating fat storage and lipid droplet formation; act by inhibiting the lipolytic process. Also regulates lipotoxicity by inhibiting desaturation of fatty acids. Also acts as an E3 ubiquitin-protein ligase via its RING-type zinc finger: mediates 'Lys-63'-linked ubiquitination of target proteins. Involved in the non-canonical Wnt signaling pathway in vascular development: acts by mediating ubiquitination and degradation of FLNA and NFATC2 downstream of RSPO3, leading to inhibit the non-canonical Wnt signaling pathway and promoting vessel regression. Also has ATPase activity; ATPase activity is required for ubiquitination of LPS. This is E3 ubiquitin-protein ligase RNF213 from Mus musculus (Mouse).